Here is a 194-residue protein sequence, read N- to C-terminus: MQESHFFAHLARMKLIQRWPLMRSVSSENVSEHSLQVAFVAHALALIKNKKFGGHINAERVAVLAMYHDSSEVLTGDLPTPVKYYNPEIAKEYKKIEAAAEQKLLSMLPEEFQEDFRPFVISQQTSEEEAQIVKQADSICAYLKCLEELSAGNHEFALAKKRLDITLAERKTPEMDYFLNTFAPSFELSLDEIS.

Residues 18 to 19 (RW) and His-33 each bind substrate. An HD domain is found at 30–142 (VSEHSLQVAF…VKQADSICAY (113 aa)). A divalent metal cation is bound by residues His-33, His-68, and Asp-69. Residues Asp-69, 77-80 (DLPT), and Asp-137 each bind substrate. An a divalent metal cation-binding site is contributed by Asp-137.

It belongs to the 5DNU family. In terms of assembly, homodimer. A divalent metal cation is required as a cofactor.

It localises to the cytoplasm. It carries out the reaction a 2'-deoxyribonucleoside 5'-phosphate + H2O = a 2'-deoxyribonucleoside + phosphate. In terms of biological role, catalyzes the strictly specific dephosphorylation of 2'-deoxyribonucleoside 5'-monophosphates. The sequence is that of 5'-deoxynucleotidase VV1113 from Vibrio vulnificus (strain YJ016).